The following is a 235-amino-acid chain: Large ribosomal subunit protein uL1 (235 aa).

It belongs to the universal ribosomal protein uL1 family. As to quaternary structure, part of the 50S ribosomal subunit.

Its function is as follows. Binds directly to 23S rRNA. The L1 stalk is quite mobile in the ribosome, and is involved in E site tRNA release. In terms of biological role, protein L1 is also a translational repressor protein, it controls the translation of the L11 operon by binding to its mRNA. The protein is Large ribosomal subunit protein uL1 of Methylobacterium nodulans (strain LMG 21967 / CNCM I-2342 / ORS 2060).